Here is a 179-residue protein sequence, read N- to C-terminus: Mediator of RNA polymerase II transcription subunit 29 (179 aa).

The protein belongs to the Mediator complex subunit 29 family. As to quaternary structure, component of the Mediator complex.

Its subcellular location is the nucleus. In terms of biological role, component of the Mediator complex, a coactivator involved in the regulated transcription of nearly all RNA polymerase II-dependent genes. Mediator functions as a bridge to convey information from gene-specific regulatory proteins to the basal RNA polymerase II transcription machinery. Mediator is recruited to promoters by direct interactions with regulatory proteins and serves as a scaffold for the assembly of a functional preinitiation complex with RNA polymerase II and the general transcription factors. The polypeptide is Mediator of RNA polymerase II transcription subunit 29 (med29) (Danio rerio (Zebrafish)).